The primary structure comprises 690 residues: Elongation factor G (690 aa).

Positions 8–283 (EDYRNFGIMA…AVVDYLPSPV (276 aa)) constitute a tr-type G domain. Residues 17–24 (AHIDAGKT), 81–85 (DTPGH), and 135–138 (NKMD) contribute to the GTP site.

This sequence belongs to the TRAFAC class translation factor GTPase superfamily. Classic translation factor GTPase family. EF-G/EF-2 subfamily.

The protein resides in the cytoplasm. In terms of biological role, catalyzes the GTP-dependent ribosomal translocation step during translation elongation. During this step, the ribosome changes from the pre-translocational (PRE) to the post-translocational (POST) state as the newly formed A-site-bound peptidyl-tRNA and P-site-bound deacylated tRNA move to the P and E sites, respectively. Catalyzes the coordinated movement of the two tRNA molecules, the mRNA and conformational changes in the ribosome. This Rhodopseudomonas palustris (strain BisB5) protein is Elongation factor G.